The chain runs to 146 residues: Small RNA-binding protein 11, chloroplastic (146 aa).

Residues 1–31 constitute a chloroplast transit peptide; that stretch reads MAALARIGGRHLKSVCLINSSASCFFTQRRG. The 79-residue stretch at 34–112 folds into the RRM domain; the sequence is SKLFIGGLSF…RTIFVDYAKA (79 aa). A Phosphoserine modification is found at Ser42.

In terms of tissue distribution, expressed in rosette leaves, cauline leaves, stems and flowers.

The protein localises to the plastid. It is found in the chloroplast. Functionally, probable RNA-binding protein that may be involved in salt and oxidative stress tolerance. The chain is Small RNA-binding protein 11, chloroplastic from Arabidopsis thaliana (Mouse-ear cress).